The sequence spans 123 residues: Putative iron-sulfur cluster insertion protein ErpA (123 aa).

Residues cysteine 51, cysteine 115, and cysteine 117 each contribute to the iron-sulfur cluster site.

Belongs to the HesB/IscA family. Homodimer. Iron-sulfur cluster is required as a cofactor.

Functionally, required for insertion of 4Fe-4S clusters. This chain is Putative iron-sulfur cluster insertion protein ErpA, found in Bordetella bronchiseptica (strain ATCC BAA-588 / NCTC 13252 / RB50) (Alcaligenes bronchisepticus).